The following is a 187-amino-acid chain: Putative manganese efflux pump MntP (187 aa).

A run of 6 helical transmembrane segments spans residues L3 to G23, L41 to A61, T62 to G82, L106 to L128, A142 to G162, and I167 to G187.

It belongs to the MntP (TC 9.B.29) family.

It localises to the cell inner membrane. Functionally, probably functions as a manganese efflux pump. This is Putative manganese efflux pump MntP from Cronobacter sakazakii (strain ATCC BAA-894) (Enterobacter sakazakii).